Here is a 241-residue protein sequence, read N- to C-terminus: Protein unc-119 homolog B-B (241 aa).

The disordered stretch occupies residues 1–46 (MSGSNREAALAGQPKDERKKSGGGVINRLKARRVQGKESGTSDQSS). A tetradecanoate-binding site is contributed by Tyr132.

It belongs to the PDE6D/unc-119 family.

It is found in the cell projection. Its subcellular location is the cilium. Myristoyl-binding protein that acts as a cargo adapter: specifically binds the myristoyl moiety of a subset of N-terminally myristoylated proteins and is required for their localization. Plays a key role in localization of proteins to the primary cilium membrane. The protein is Protein unc-119 homolog B-B (unc119b-b) of Xenopus laevis (African clawed frog).